The sequence spans 2097 residues: SCAR-like protein 1 (2097 aa).

7 disordered regions span residues 205–227, 544–565, 1443–1467, 1588–1616, 1730–1802, 1820–1842, and 1893–1944; these read IANSESHTTSKDRSSRKVPPRTT, AHSSDKQSSQKSSGLDGSSIES, SQIASCSPTPSNEKIDELNAPPLSS, STEETYRLSSPVPPPNEPFSNVSYEDPQK, QERV…EKTV, ASSHVSENGCNQQSHGESLPVTS, and YEGP…EGGY. The span at 549–562 shows a compositional bias: low complexity; that stretch reads KQSSQKSSGLDGSS. The span at 1443–1454 shows a compositional bias: polar residues; sequence SQIASCSPTPSN. The segment covering 1766–1794 has biased composition (polar residues); it reads SISQQGLQGSVFPSDTSDNGEHSSYTSRA. The span at 1908 to 1922 shows a compositional bias: basic and acidic residues; sequence YPHDDHNSEKEDIHQ. In terms of domain architecture, WH2 spans 2028–2046; sequence ERNLLLEQIRNKTFNLKPV.

This sequence belongs to the SCAR/WAVE family.

It localises to the cytoplasm. The protein resides in the cytoskeleton. In terms of biological role, involved in regulation of actin and microtubule organization. Part of a WAVE complex that activates the Arp2/3 complex. The chain is SCAR-like protein 1 from Oryza sativa subsp. japonica (Rice).